The chain runs to 294 residues: 33 kDa chaperonin (294 aa).

Cystine bridges form between C238–C240 and C271–C274.

It belongs to the HSP33 family. Post-translationally, under oxidizing conditions two disulfide bonds are formed involving the reactive cysteines. Under reducing conditions zinc is bound to the reactive cysteines and the protein is inactive.

It localises to the cytoplasm. Functionally, redox regulated molecular chaperone. Protects both thermally unfolding and oxidatively damaged proteins from irreversible aggregation. Plays an important role in the bacterial defense system toward oxidative stress. The chain is 33 kDa chaperonin from Staphylococcus haemolyticus (strain JCSC1435).